Here is a 208-residue protein sequence, read N- to C-terminus: MVLSGKDLAAHRKEEILFQGLSFCLFPHQLMTITGPNGIGKSTLLRIIVGLFEAAEGHVSLKDHEQTYPVATACHYLGPQNAMKPFLSVIDNLQFWSAFYGQYLRSPHEALADMGLSDLAPLPFNVLSTGQKRCVAIARLLLSYRPIWILDEPISGLDSHAQTLLANLFQRHLNQGGMIIAATHSPFGIPENHKIALEKFVPSQERRE.

Residues 3–206 form the ABC transporter domain; that stretch reads LSGKDLAAHR…LEKFVPSQER (204 aa). 35–42 lines the ATP pocket; the sequence is GPNGIGKS.

It belongs to the ABC transporter superfamily. CcmA exporter (TC 3.A.1.107) family. The complex is composed of two ATP-binding proteins (CcmA) and two transmembrane proteins (CcmB).

It localises to the cell inner membrane. It catalyses the reaction heme b(in) + ATP + H2O = heme b(out) + ADP + phosphate + H(+). Functionally, part of the ABC transporter complex CcmAB involved in the biogenesis of c-type cytochromes; once thought to export heme, this seems not to be the case, but its exact role is uncertain. Responsible for energy coupling to the transport system. This chain is Cytochrome c biogenesis ATP-binding export protein CcmA, found in Bartonella quintana (strain Toulouse) (Rochalimaea quintana).